The primary structure comprises 430 residues: Protein arginine methyltransferase NDUFAF7, mitochondrial (430 aa).

The transit peptide at 1–31 (MSGLARLRKTAFLMVSASANCRIQRYQSSRT) directs the protein to the mitochondrion.

This sequence belongs to the NDUFAF7 family.

It localises to the mitochondrion. It catalyses the reaction L-arginyl-[protein] + 2 S-adenosyl-L-methionine = N(omega),N(omega)'-dimethyl-L-arginyl-[protein] + 2 S-adenosyl-L-homocysteine + 2 H(+). Its function is as follows. Arginine methyltransferase involved in the assembly or stability of mitochondrial NADH:ubiquinone oxidoreductase complex (complex I). Acts by mediating symmetric dimethylation of 'Arg-118' of ndufs2 after it assembles into the complex I, stabilizing the early intermediate complex. The chain is Protein arginine methyltransferase NDUFAF7, mitochondrial from Xenopus tropicalis (Western clawed frog).